Here is a 203-residue protein sequence, read N- to C-terminus: Small ribosomal subunit protein uS4 (203 aa).

Positions 93–153 (QRLDSVVYRL…EKSKNILPIQ (61 aa)) constitute an S4 RNA-binding domain.

This sequence belongs to the universal ribosomal protein uS4 family. As to quaternary structure, part of the 30S ribosomal subunit. Contacts protein S5. The interaction surface between S4 and S5 is involved in control of translational fidelity.

In terms of biological role, one of the primary rRNA binding proteins, it binds directly to 16S rRNA where it nucleates assembly of the body of the 30S subunit. Functionally, with S5 and S12 plays an important role in translational accuracy. The sequence is that of Small ribosomal subunit protein uS4 from Leuconostoc mesenteroides subsp. mesenteroides (strain ATCC 8293 / DSM 20343 / BCRC 11652 / CCM 1803 / JCM 6124 / NCDO 523 / NBRC 100496 / NCIMB 8023 / NCTC 12954 / NRRL B-1118 / 37Y).